Here is a 409-residue protein sequence, read N- to C-terminus: Multidrug efflux pump Tap (409 aa).

Transmembrane regions (helical) follow at residues 10-30, 46-66, 80-98, 104-123, 144-168, 174-193, 218-240, 260-282, 289-308, 313-335, 348-370, and 375-397; these read LLIL…IVAF, IVAM…GAAV, LLSA…IFGV, AVLA…GMTA, SVYE…IATL, MWVT…VLRL, FVWY…GLYM, LGWV…AVMS, ATML…IAFL, LILV…YNYV, VVGV…AGPL, and GLHA…AVFL.

The protein belongs to the major facilitator superfamily. Drug:H(+) antiporter-3 (DHA3) (TC 2.A.1.21) family.

Its subcellular location is the cell inner membrane. With respect to regulation, efflux activity is inhibited by carbonyl cyanide m-chlorophenylhydrazone (CCCP) and reserpine, but not by o-vanadate or chlorpromazine (CPZ). Functionally, efflux pump that contributes to intrinsic antibiotic resistance. The pump uses the electrochemical gradient as a source of energy. Confers low-level resistance to tetracycline and to several aminoglycosides, including streptomycin, gentamicin, 2'-N-ethylnetilmicin and 6'-N-ethylnetilmicin. The sequence is that of Multidrug efflux pump Tap from Mycolicibacterium fortuitum (Mycobacterium fortuitum).